A 246-amino-acid chain; its full sequence is Small ribosomal subunit protein uS2 (246 aa).

The tract at residues serine 225–glutamate 246 is disordered.

Belongs to the universal ribosomal protein uS2 family.

This is Small ribosomal subunit protein uS2 from Cellvibrio japonicus (strain Ueda107) (Pseudomonas fluorescens subsp. cellulosa).